A 497-amino-acid chain; its full sequence is Indoleacetaldoxime dehydratase (497 aa).

The helical transmembrane segment at 2-20 (EMILSISLCLTTLITLLLL) threads the bilayer. Residue cysteine 439 coordinates heme.

It belongs to the cytochrome P450 family.

Its subcellular location is the membrane. It carries out the reaction (E)-(indol-3-yl)acetaldehyde oxime = (indol-3-yl)acetonitrile + H2O. Functionally, involved in the biosynthesis of the indole-derived phytoalexin camalexin. Catalyzes the conversion of indole-3-acetaldoxime to indole-3-acetonitrile. Required for resistance to A.brassicicola and B.cinerea. This Arabidopsis thaliana (Mouse-ear cress) protein is Indoleacetaldoxime dehydratase (CYP71A13).